The chain runs to 268 residues: Tryptophan synthase alpha chain (268 aa).

Residues E49 and D60 each act as proton acceptor in the active site.

This sequence belongs to the TrpA family. As to quaternary structure, tetramer of two alpha and two beta chains.

It carries out the reaction (1S,2R)-1-C-(indol-3-yl)glycerol 3-phosphate + L-serine = D-glyceraldehyde 3-phosphate + L-tryptophan + H2O. Its pathway is amino-acid biosynthesis; L-tryptophan biosynthesis; L-tryptophan from chorismate: step 5/5. In terms of biological role, the alpha subunit is responsible for the aldol cleavage of indoleglycerol phosphate to indole and glyceraldehyde 3-phosphate. The polypeptide is Tryptophan synthase alpha chain (Vibrio vulnificus (strain CMCP6)).